The primary structure comprises 38 residues: MQPITTASTQATQKDKSSEKKDNYIIKGLFWDPACVIA.

The span at 1 to 12 (MQPITTASTQAT) shows a compositional bias: polar residues. Residues 1 to 20 (MQPITTASTQATQKDKSSEK) are disordered. A propeptide spanning residues 1–23 (MQPITTASTQATQKDKSSEKKDN) is cleaved from the precursor. Cysteine 35 carries the post-translational modification Cysteine methyl ester. Cysteine 35 carries S-farnesyl cysteine lipidation. Residues 36 to 38 (VIA) constitute a propeptide, removed in mature form.

The protein localises to the cell membrane. Functionally, the active factor is excreted into the culture medium by haploid cells of the A mating type and acts on cells of the opposite mating type (type alpha). It mediates the conjugation process between the two types by inhibiting the initiation of DNA synthesis in type alpha cells and synchronizing them with type A. In Saccharomyces cerevisiae (strain ATCC 204508 / S288c) (Baker's yeast), this protein is Mating hormone A-factor 2 (MFA2).